The sequence spans 120 residues: NAD(P)H-quinone oxidoreductase subunit 3, chloroplastic (120 aa).

3 consecutive transmembrane segments (helical) span residues 7–27, 64–84, and 89–109; these read YQTF…ALLI, SFAL…PWAM, and LGIF…IGLV.

It belongs to the complex I subunit 3 family. In terms of assembly, NDH is composed of at least 16 different subunits, 5 of which are encoded in the nucleus.

The protein localises to the plastid. It is found in the chloroplast thylakoid membrane. It carries out the reaction a plastoquinone + NADH + (n+1) H(+)(in) = a plastoquinol + NAD(+) + n H(+)(out). It catalyses the reaction a plastoquinone + NADPH + (n+1) H(+)(in) = a plastoquinol + NADP(+) + n H(+)(out). In terms of biological role, NDH shuttles electrons from NAD(P)H:plastoquinone, via FMN and iron-sulfur (Fe-S) centers, to quinones in the photosynthetic chain and possibly in a chloroplast respiratory chain. The immediate electron acceptor for the enzyme in this species is believed to be plastoquinone. Couples the redox reaction to proton translocation, and thus conserves the redox energy in a proton gradient. The polypeptide is NAD(P)H-quinone oxidoreductase subunit 3, chloroplastic (Psilotum nudum (Whisk fern)).